The chain runs to 285 residues: Diaminopimelate epimerase (285 aa).

The substrate site is built by Asn-11 and Asn-62. Cys-71 serves as the catalytic Proton donor. Residues 72-73 (GN), Asn-167, Asn-200, and 218-219 (ER) each bind substrate. The Proton acceptor role is filled by Cys-227. Residue 228 to 229 (GT) coordinates substrate.

This sequence belongs to the diaminopimelate epimerase family. In terms of assembly, homodimer.

The protein resides in the cytoplasm. The catalysed reaction is (2S,6S)-2,6-diaminopimelate = meso-2,6-diaminopimelate. The protein operates within amino-acid biosynthesis; L-lysine biosynthesis via DAP pathway; DL-2,6-diaminopimelate from LL-2,6-diaminopimelate: step 1/1. Catalyzes the stereoinversion of LL-2,6-diaminopimelate (L,L-DAP) to meso-diaminopimelate (meso-DAP), a precursor of L-lysine and an essential component of the bacterial peptidoglycan. This is Diaminopimelate epimerase from Agathobacter rectalis (strain ATCC 33656 / DSM 3377 / JCM 17463 / KCTC 5835 / VPI 0990) (Eubacterium rectale).